The sequence spans 217 residues: Adenylate kinase (217 aa).

10-15 (GAGKGT) serves as a coordination point for ATP. Residues 30 to 59 (STGDMLRAAVKAGTPLGLQAKDIMASGGLV) are NMP. AMP contacts are provided by residues T31, R36, 57–59 (GLV), 85–88 (GFPR), and Q92. The segment at 122 to 159 (GRRVHEASGRVYHIIHNAPRVEGHDDVTGEPLVQRPDD) is LID. ATP is bound by residues R123 and 132–133 (VY). R156 and R167 together coordinate AMP. G203 lines the ATP pocket.

Belongs to the adenylate kinase family. Monomer.

It is found in the cytoplasm. The catalysed reaction is AMP + ATP = 2 ADP. It participates in purine metabolism; AMP biosynthesis via salvage pathway; AMP from ADP: step 1/1. In terms of biological role, catalyzes the reversible transfer of the terminal phosphate group between ATP and AMP. Plays an important role in cellular energy homeostasis and in adenine nucleotide metabolism. This chain is Adenylate kinase, found in Cellvibrio japonicus (strain Ueda107) (Pseudomonas fluorescens subsp. cellulosa).